The chain runs to 121 residues: uncharacterized protein (121 aa).

The protein belongs to the HHV-5 UL30 protein family.

This is an uncharacterized protein from Human cytomegalovirus (strain AD169) (HHV-5).